The following is a 458-amino-acid chain: Type III intermediate filament (458 aa).

Positions 1-100 are head; it reads MEKGYKMNRS…KVNRTNEKAE (100 aa). Residues 97 to 405 enclose the IF rod domain; it reads EKAEMIELND…KLLEGEENRI (309 aa). The interval 406-458 is tail; that stretch reads SMPLPSFGSMSLSDAMFEQQPFENRTSKKKIVIKTVETSGGDVISETTQKIED.

Belongs to the intermediate filament family.

The polypeptide is Type III intermediate filament (Tetronarce californica (Pacific electric ray)).